Reading from the N-terminus, the 507-residue chain is Maturase K (507 aa).

The protein belongs to the intron maturase 2 family. MatK subfamily.

It is found in the plastid. It localises to the chloroplast. Usually encoded in the trnK tRNA gene intron. Probably assists in splicing its own and other chloroplast group II introns. This Cupaniopsis anacardioides (Carrotwood) protein is Maturase K.